Here is a 453-residue protein sequence, read N- to C-terminus: Tubulin delta chain (453 aa).

Residue 143 to 149 (AGGTGSG) coordinates GTP.

The protein belongs to the tubulin family. As to quaternary structure, found in a complex with TEDC1, TEDC2, TUBE1 and TUBD1.

It is found in the nucleus. It localises to the cytoplasm. The protein localises to the cytoskeleton. The protein resides in the microtubule organizing center. Its subcellular location is the centrosome. It is found in the centriole. It localises to the cell projection. The protein localises to the cilium. In terms of biological role, acts as a positive regulator of hedgehog signaling and regulates ciliary function. The chain is Tubulin delta chain (TUBD1) from Macaca fascicularis (Crab-eating macaque).